The primary structure comprises 125 residues: N-alpha-acetyltransferase 38, NatC auxiliary subunit (125 aa).

Residues 1 to 42 (MAGAGPTMLLREENGCCSRRQSSSSAGDSDGEQEDSPATRAR) are disordered. At Ala-2 the chain carries N-acetylalanine. Residues 18 to 28 (SRRQSSSSAGD) are compositionally biased toward low complexity. Residues Ser-22, Ser-25, and Ser-29 each carry the phosphoserine modification. Residues 40 to 118 (RARQQLEALL…IVSIEVQRES (79 aa)) form the Sm domain.

The protein belongs to the snRNP Sm proteins family. As to quaternary structure, component of the N-terminal acetyltransferase C (NatC) complex, which is composed of NAA35, NAA38 and NAA30.

Its subcellular location is the cytoplasm. The protein resides in the nucleus. Its function is as follows. Auxillary component of the N-terminal acetyltransferase C (NatC) complex which catalyzes acetylation of N-terminal methionine residues. N-terminal acetylation protects proteins from ubiquitination and degradation by the N-end rule pathway. The protein is N-alpha-acetyltransferase 38, NatC auxiliary subunit (Naa38) of Mus musculus (Mouse).